The following is a 231-amino-acid chain: Orotate phosphoribosyltransferase (231 aa).

5-phospho-alpha-D-ribose 1-diphosphate is bound by residues K27, 79 to 80 (YK), R106, K107, K110, H112, and 133 to 141 (DDVMTAGTA). The orotate site is built by T137 and R166.

The protein belongs to the purine/pyrimidine phosphoribosyltransferase family. PyrE subfamily. Homodimer. Mg(2+) serves as cofactor.

It catalyses the reaction orotidine 5'-phosphate + diphosphate = orotate + 5-phospho-alpha-D-ribose 1-diphosphate. The protein operates within pyrimidine metabolism; UMP biosynthesis via de novo pathway; UMP from orotate: step 1/2. In terms of biological role, catalyzes the transfer of a ribosyl phosphate group from 5-phosphoribose 1-diphosphate to orotate, leading to the formation of orotidine monophosphate (OMP). This is Orotate phosphoribosyltransferase from Bifidobacterium adolescentis (strain ATCC 15703 / DSM 20083 / NCTC 11814 / E194a).